We begin with the raw amino-acid sequence, 714 residues long: DNA gyrase subunit B (714 aa).

A Toprim domain is found at 492-606 (SELYVVEGDS…NGHVFLAQPP (115 aa)). Positions 498, 571, and 573 each coordinate Mg(2+).

This sequence belongs to the type II topoisomerase GyrB family. In terms of assembly, heterotetramer, composed of two GyrA and two GyrB chains. In the heterotetramer, GyrA contains the active site tyrosine that forms a transient covalent intermediate with DNA, while GyrB binds cofactors and catalyzes ATP hydrolysis. Mg(2+) is required as a cofactor. The cofactor is Mn(2+). Requires Ca(2+) as cofactor.

The protein resides in the cytoplasm. The catalysed reaction is ATP-dependent breakage, passage and rejoining of double-stranded DNA.. With respect to regulation, DNA supercoiling is inhibited by EDTA, novobiocin, coumermycin and ciprofloxacin. Its function is as follows. A type II topoisomerase that negatively supercoils closed circular double-stranded DNA in an ATP-dependent manner and also catalyzes the interconversion of other topological isomers of double-stranded DNA rings, including catenanes and knotted rings. Relaxes negatively supercoiled DNA in an ATP-independent manner. A linear reaction intermediate can be trapped in the presence of the antibiotic ciprofloxacin. Negative supercoiling favors strand separation, and DNA replication, transcription, recombination and repair, all of which involve strand separation. Type II topoisomerases break and join 2 DNA strands simultaneously in an ATP-dependent manner. This is DNA gyrase subunit B from Mycobacterium bovis (strain BCG / Pasteur 1173P2).